The chain runs to 276 residues: Alpha N-terminal protein methyltransferase 1 (276 aa).

Residues glycine 96, arginine 101, 118-120 (EPV), 149-150 (LQ), and glutamine 165 each bind S-adenosyl-L-methionine.

The protein belongs to the methyltransferase superfamily. NTM1 family.

It carries out the reaction N-terminal L-alanyl-L-prolyl-L-lysyl-[protein] + 3 S-adenosyl-L-methionine = N-terminal N,N,N-trimethyl-L-alanyl-L-prolyl-L-lysyl-[protein] + 3 S-adenosyl-L-homocysteine + 3 H(+). It catalyses the reaction N-terminal L-seryl-L-prolyl-L-lysyl-[protein] + 3 S-adenosyl-L-methionine = N-terminal N,N,N-trimethyl-L-seryl-L-prolyl-L-lysyl-[protein] + 3 S-adenosyl-L-homocysteine + 3 H(+). The catalysed reaction is N-terminal L-prolyl-L-prolyl-L-lysyl-[protein] + 2 S-adenosyl-L-methionine = N-terminal N,N-dimethyl-L-prolyl-L-prolyl-L-lysyl-[protein] + 2 S-adenosyl-L-homocysteine + 2 H(+). Its function is as follows. Alpha-N-methyltransferase that methylates the N-terminus of target proteins containing the N-terminal motif [Ala/Pro/Ser]-Pro-Lys when the initiator Met is cleaved. Specifically catalyzes mono-, di- or tri-methylation of exposed alpha-amino group of Ala or Ser residue in the [Ala/Ser]-Pro-Lys motif and mono- or di-methylation of Pro in the Pro-Pro-Lys motif. The polypeptide is Alpha N-terminal protein methyltransferase 1 (Arabidopsis thaliana (Mouse-ear cress)).